A 599-amino-acid chain; its full sequence is Membrane protein insertase YidC (599 aa).

A helical transmembrane segment spans residues 6–26; that stretch reads NYFIAIALSVVIVLAWQFLYM. Residues 35–78 form a disordered region; the sequence is RAEEARQAQQQTTQQQPAPGAAPGATVEGAPPASSTQAAATATR. The segment covering 41 to 76 has biased composition (low complexity); that stretch reads QAQQQTTQQQPAPGAAPGATVEGAPPASSTQAAATA. Transmembrane regions (helical) follow at residues 378–398, 448–468, 501–521, and 536–556; these read FGVA…PLAS, WPML…YVTI, VPHF…MFLQ, and IFTW…AGLV.

This sequence belongs to the OXA1/ALB3/YidC family. Type 1 subfamily. In terms of assembly, interacts with the Sec translocase complex via SecD. Specifically interacts with transmembrane segments of nascent integral membrane proteins during membrane integration.

Its subcellular location is the cell inner membrane. Required for the insertion and/or proper folding and/or complex formation of integral membrane proteins into the membrane. Involved in integration of membrane proteins that insert both dependently and independently of the Sec translocase complex, as well as at least some lipoproteins. Aids folding of multispanning membrane proteins. The sequence is that of Membrane protein insertase YidC from Agrobacterium fabrum (strain C58 / ATCC 33970) (Agrobacterium tumefaciens (strain C58)).